The sequence spans 102 residues: Complement inhibitor RaCI3 (102 aa).

The N-terminal stretch at 1–24 is a signal peptide; the sequence is MAALNGLVLLLLTISAMFISECYS. 3 disulfides stabilise this stretch: cysteine 37–cysteine 61, cysteine 42–cysteine 63, and cysteine 57–cysteine 78.

It belongs to the RaCI family. Expressed in salivary glands.

The protein resides in the secreted. Functionally, complement inhibitor. Prevents complement-mediated C5 activation by binding to C5. Binds C5 at a different binding site than the other tick complement inhibitors OmCI and CirpT1, and the drug eculizumab. Inhibits complement in human and guinea pig but not in other species tested (rabbit, rat, mouse, and pig). The protein is Complement inhibitor RaCI3 of Dermacentor andersoni (Rocky mountain wood tick).